Consider the following 67-residue polypeptide: Ranatuerin-2Vb (67 aa).

An N-terminal signal peptide occupies residues methionine 1–cysteine 22. A propeptide spanning residues glutamate 23–arginine 39 is cleaved from the precursor. Cysteine 62 and cysteine 67 form a disulfide bridge.

Expressed by the skin glands.

It is found in the secreted. Its function is as follows. Antimicrobial peptide. The chain is Ranatuerin-2Vb from Odorrana versabilis (Chinese bamboo leaf odorous frog).